A 202-amino-acid chain; its full sequence is Glycerol-3-phosphate acyltransferase (202 aa).

The next 6 helical transmembrane spans lie at 2 to 22 (MIIVMLLLSYLIGAFPSGFVI), 54 to 74 (FLVTFLDIFKGFITVFFPLWL), 85 to 105 (FFTNGLIVGLFAILGHVYPVY), 120 to 140 (VVLGVNPILLLILAIIFFIVL), 141 to 161 (KIFKYVSLASIVAAICCVIGS), and 162 to 182 (LIIQDYILLVVSFLVSIILII).

This sequence belongs to the PlsY family. In terms of assembly, probably interacts with PlsX.

The protein resides in the cell membrane. The enzyme catalyses an acyl phosphate + sn-glycerol 3-phosphate = a 1-acyl-sn-glycero-3-phosphate + phosphate. It functions in the pathway lipid metabolism; phospholipid metabolism. Functionally, catalyzes the transfer of an acyl group from acyl-phosphate (acyl-PO(4)) to glycerol-3-phosphate (G3P) to form lysophosphatidic acid (LPA). This enzyme utilizes acyl-phosphate as fatty acyl donor, but not acyl-CoA or acyl-ACP. This is Glycerol-3-phosphate acyltransferase from Staphylococcus aureus (strain USA300).